We begin with the raw amino-acid sequence, 944 residues long: Protocadherin gamma-C5 (944 aa).

The first 29 residues, 1-29 (MGPKTLPQLAGKWQVLCMLSLCCWGWVSG), serve as a signal peptide directing secretion. 6 consecutive Cadherin domains span residues 30–133 (QLRY…SPSF), 134–242 (ATPE…APTF), 243–350 (QSSV…APEV), 351–454 (LLAS…APRF), 455–564 (NQQL…APAV), and 571–677 (WEHS…MPKS). Topologically, residues 30-693 (QLRYSVVEES…PPERSDLTLY (664 aa)) are extracellular. 3 N-linked (GlcNAc...) asparagine glycosylation sites follow: Asn-265, Asn-443, and Asn-547. Residues 694–714 (LIVALATVSLLSLVTFTFLSA) form a helical membrane-spanning segment. Residues 715–944 (KCLQGNADGD…KKKSGKKEKK (230 aa)) lie on the Cytoplasmic side of the membrane. 3 disordered regions span residues 722–747 (DGDGGGGQCCRRQDSPSPDFYKQSSP), 812–853 (SNTL…WPNN), and 914–944 (ATLTNAAGKRDGKAPAGGNGNKKKSGKKEKK). Positions 820–853 (QQAPPNTDWRFSQAQRPGTSGSQNGDDTGTWPNN) are enriched in polar residues. Residues 934-944 (NKKKSGKKEKK) are compositionally biased toward basic residues.

The protein localises to the cell membrane. Potential calcium-dependent cell-adhesion protein. May be involved in the establishment and maintenance of specific neuronal connections in the brain. This chain is Protocadherin gamma-C5 (PCDHGC5), found in Pan troglodytes (Chimpanzee).